A 1165-amino-acid chain; its full sequence is DNA-directed RNA polymerase subunit beta (1165 aa).

This sequence belongs to the RNA polymerase beta chain family. The RNAP catalytic core consists of 2 alpha, 1 beta, 1 beta' and 1 omega subunit. When a sigma factor is associated with the core the holoenzyme is formed, which can initiate transcription.

It carries out the reaction RNA(n) + a ribonucleoside 5'-triphosphate = RNA(n+1) + diphosphate. In terms of biological role, DNA-dependent RNA polymerase catalyzes the transcription of DNA into RNA using the four ribonucleoside triphosphates as substrates. The protein is DNA-directed RNA polymerase subunit beta of Corynebacterium glutamicum (strain ATCC 13032 / DSM 20300 / JCM 1318 / BCRC 11384 / CCUG 27702 / LMG 3730 / NBRC 12168 / NCIMB 10025 / NRRL B-2784 / 534).